The sequence spans 78 residues: Beta-defensin 105A (78 aa).

The signal sequence occupies residues 1-27 (MALIRKTFYFLFAVFFVLVQLPSECQA). Cystine bridges form between C43/C74, C53/C67, and C57/C73.

Belongs to the beta-defensin family.

The protein resides in the secreted. In terms of biological role, has antimicrobial activity. The protein is Beta-defensin 105A (DEFB105A) of Pongo pygmaeus (Bornean orangutan).